Here is a 263-residue protein sequence, read N- to C-terminus: uncharacterized protein (263 aa).

An NADP(+)-binding site is contributed by 13-20; sequence TGSTSGIG. A substrate-binding site is contributed by Ser141. Tyr154 functions as the Proton acceptor in the catalytic mechanism.

Belongs to the short-chain dehydrogenases/reductases (SDR) family.

This is an uncharacterized protein from Bacillus subtilis (strain 168).